The following is a 234-amino-acid chain: Endonuclease NucS (234 aa).

This sequence belongs to the NucS endonuclease family.

The protein resides in the cytoplasm. In terms of biological role, cleaves both 3' and 5' ssDNA extremities of branched DNA structures. This Bifidobacterium animalis subsp. lactis (strain AD011) protein is Endonuclease NucS.